The sequence spans 450 residues: MISEIAKLAALVLTNTVKVDDFLQSSKLPPPTFHEDGPIDLGLSPEVEAARVAAIESSLRLHDLLXGPVELIRPTVNAXSLEAIYKYDVASKVPIHGEIPIIELAXQCKMNEPDLRRILRFAIIHHRVFQEPRKGIITHSAASRRLVEDSAARDGLGLQFDDAWQSFARGFSLAHNTDKSVFEYMEAHPEKAKRFAGAMSSFSSYRGHGPEYLARGFPWASLGTKTVVDVGGSEGKYSIALAKSFPQLKFIVQDLPAVVRAVNAKRPIPLELEDRVTFMEHDMFTEQPVSADVYMFRFVFHDWPDKYVVNILRRLIPALKPGARIIISDSILPEPNTLSELYERKIRALDMVMLSFFNSRERERDDWERVCQEVDPRFKFVDAWVPEGAALGIIEAVWQPEPTMEXPKAIESDESSSTGVXDSAKGIKGMESNGRNGXISVTCVDDVDVN.

Aspartate 254 contributes to the S-adenosyl-L-methionine binding site. The Proton acceptor role is filled by histidine 301.

This sequence belongs to the class I-like SAM-binding methyltransferase superfamily. Cation-independent O-methyltransferase family. COMT subfamily.

It participates in secondary metabolite biosynthesis. In terms of biological role, non-reducing polyketide synthase; part of the gene cluster that mediates the biosynthesis of orcinol depsidone grayanic acid (GRA), the only major secondary metabolite known in C.grayi. The first step consists in the ring and depside synthesis by PKS16 leading to 4-O-demethylsphaerophorin, involving different orcinol-like rings, one with acetyl CoA and the other with octanoyl CoA as the starter. Further depsidone formation by the GRA cluster-specific cytochrome P450 leads to 4-O-demethylgrayanic acid. Finally, the cluster specific O-methyltransferase probably converts the 4-O-demethylgrayanic acid into grayanic acid. The polypeptide is Grayanic acid biosynthesis cluster O-methyltransferase (Cladonia grayi (Gray's cup lichen)).